Consider the following 448-residue polypeptide: Methylenetetrahydrofolate--tRNA-(uracil-5-)-methyltransferase TrmFO (448 aa).

13–18 (GAGLAG) serves as a coordination point for FAD.

It belongs to the MnmG family. TrmFO subfamily. Requires FAD as cofactor.

It localises to the cytoplasm. The enzyme catalyses uridine(54) in tRNA + (6R)-5,10-methylene-5,6,7,8-tetrahydrofolate + NADH + H(+) = 5-methyluridine(54) in tRNA + (6S)-5,6,7,8-tetrahydrofolate + NAD(+). It catalyses the reaction uridine(54) in tRNA + (6R)-5,10-methylene-5,6,7,8-tetrahydrofolate + NADPH + H(+) = 5-methyluridine(54) in tRNA + (6S)-5,6,7,8-tetrahydrofolate + NADP(+). Catalyzes the folate-dependent formation of 5-methyl-uridine at position 54 (M-5-U54) in all tRNAs. The sequence is that of Methylenetetrahydrofolate--tRNA-(uracil-5-)-methyltransferase TrmFO from Streptococcus pyogenes serotype M3 (strain ATCC BAA-595 / MGAS315).